We begin with the raw amino-acid sequence, 102 residues long: Small ribosomal subunit protein uS10 (102 aa).

The protein belongs to the universal ribosomal protein uS10 family. As to quaternary structure, part of the 30S ribosomal subunit.

Its function is as follows. Involved in the binding of tRNA to the ribosomes. This chain is Small ribosomal subunit protein uS10, found in Clavibacter michiganensis subsp. michiganensis (strain NCPPB 382).